A 165-amino-acid chain; its full sequence is ATP synthase subunit b (165 aa).

The chain crosses the membrane as a helical span at residues 11 to 31 (LIFWTIVNFLLLVFLLGKFAW).

Belongs to the ATPase B chain family. As to quaternary structure, F-type ATPases have 2 components, F(1) - the catalytic core - and F(0) - the membrane proton channel. F(1) has five subunits: alpha(3), beta(3), gamma(1), delta(1), epsilon(1). F(0) has three main subunits: a(1), b(2) and c(10-14). The alpha and beta chains form an alternating ring which encloses part of the gamma chain. F(1) is attached to F(0) by a central stalk formed by the gamma and epsilon chains, while a peripheral stalk is formed by the delta and b chains.

The protein localises to the cell membrane. In terms of biological role, f(1)F(0) ATP synthase produces ATP from ADP in the presence of a proton or sodium gradient. F-type ATPases consist of two structural domains, F(1) containing the extramembraneous catalytic core and F(0) containing the membrane proton channel, linked together by a central stalk and a peripheral stalk. During catalysis, ATP synthesis in the catalytic domain of F(1) is coupled via a rotary mechanism of the central stalk subunits to proton translocation. Component of the F(0) channel, it forms part of the peripheral stalk, linking F(1) to F(0). The protein is ATP synthase subunit b of Elusimicrobium minutum (strain Pei191).